Here is an 83-residue protein sequence, read N- to C-terminus: Disintegrin isoform D-2 (83 aa).

One can recognise a Disintegrin domain in the interval 2–83 (PPVCGNELLE…GKSSDCPWNH (82 aa)). Cystine bridges form between cysteine 5/cysteine 24, cysteine 16/cysteine 34, cysteine 18/cysteine 29, cysteine 28/cysteine 51, cysteine 42/cysteine 48, cysteine 47/cysteine 72, and cysteine 60/cysteine 79. The Cell attachment site signature appears at 64–66 (RGD).

Belongs to the venom metalloproteinase (M12B) family. P-II subfamily. P-IIa sub-subfamily. As to quaternary structure, monomer (disintegrin). As to expression, expressed by the venom gland.

The protein resides in the secreted. Its function is as follows. Inhibits fibrinogen interaction with platelets. Acts by binding to the alpha-IIb/beta-3 (ITGA2B/ITGB3) on the platelet surface and inhibits aggregation induced by ADP, thrombin, platelet-activating factor and collagen. This is Disintegrin isoform D-2 from Bitis arietans (African puff adder).